The primary structure comprises 182 residues: UPF0397 protein BCQ_2505 (182 aa).

5 helical membrane passes run 9-29, 40-60, 71-91, 114-134, and 142-162; these read VVAIGIGAALYGILGLWGFSI, AILTVFGALFGPVAGLLIGLI, WGIWWGWVISSGIIGFAMGFI, ITGLIGIVIAIIFAGAFDIIV, and IVIQVLGATIADVIVFLVLGL.

It belongs to the UPF0397 family.

Its subcellular location is the cell membrane. This chain is UPF0397 protein BCQ_2505, found in Bacillus cereus (strain Q1).